The sequence spans 557 residues: MSNPRHNEREVRSPRGDELNAKSWLTEAPLRMLMNNLDPDVAERPHELVVYGGIGRAARTWDDFDRIVATLKTLNDNETLLVQSGKPVGVFRTHKDAPRVLIANSNLVPHWANWDHFNELDKKGLAMYGQMTAGSWIYIGAQGIVQGTYETFVEAGRQHYGGNLKGRWILTGGLGGMGGAQPLAAVMAGACCLAVECDETRADFRLRTRYVDEKTHSLDEALAKIDAWTKAGEAKSIALIGNAAEIFPELVKRGVKPDIVTDQTSAHDPVHGYLPLGWTVAEWRAKQENDPKAVEKAARASMKVQVQAMLDFWNAGIPTVDYGNNIRQMALEEGLENAFAFPGFVPAYIRPLFCRGIGPYRWAALSGDPEDIAKTDAKVKELLPDNKHLHNWLDMAKERIAFQGLPARICWVGLGDRHRLGLAFNEMVRNGELKAPIVIGRDHLDSGSVASPNRETEAMKDGSDAVSDWPLLNALLNTASGATWVSLHHGGGVGMGFSQHAGMVICCDGTEDADRRLERVLWNDPATGVMRHADAGYDIALDWARKQGLRLPAILGN.

The interval 1–20 (MSNPRHNEREVRSPRGDELN) is disordered. Residues 52-53 (GG), Gln130, 176-178 (GMG), Glu196, Arg201, 242-243 (NA), 263-267 (QTSAH), 273-274 (YL), and Tyr322 contribute to the NAD(+) site. Cys410 is an active-site residue. Residue Gly492 coordinates NAD(+).

It belongs to the urocanase family. NAD(+) serves as cofactor.

It is found in the cytoplasm. It carries out the reaction 4-imidazolone-5-propanoate = trans-urocanate + H2O. The protein operates within amino-acid degradation; L-histidine degradation into L-glutamate; N-formimidoyl-L-glutamate from L-histidine: step 2/3. In terms of biological role, catalyzes the conversion of urocanate to 4-imidazolone-5-propionate. This chain is Urocanate hydratase, found in Brucella abortus (strain S19).